The following is a 482-amino-acid chain: Anthocyanin 3'-O-beta-glucosyltransferase (482 aa).

His-16 serves as the catalytic Proton acceptor. His-16 lines the an anthocyanidin pocket. Residue Asp-119 is the Charge relay of the active site. UDP-alpha-D-glucose-binding residues include Ala-349, Gln-351, His-366, Trp-369, Asn-370, Ser-371, and Glu-374. Ala-389 is an an anthocyanidin binding site. 2 residues coordinate UDP-alpha-D-glucose: Glu-390 and Gln-391.

Belongs to the UDP-glycosyltransferase family. Post-translationally, the N-terminus is blocked. As to expression, abundant in petals and barely detected in leaves.

It catalyses the reaction delphinidin 3,5-bis-O-beta-D-glucoside + UDP-alpha-D-glucose = delphinidin 3,3',5-tri-O-beta-D-glucoside + UDP + H(+). Functionally, specifically glucosylates the 3'-hydroxy group of delphinidin 3,5-di-O-glucoside to produce gentiodelphin. Shows a strict specificity for UDP-glucose as donor. This is Anthocyanin 3'-O-beta-glucosyltransferase from Gentiana triflora (Clustered gentian).